Reading from the N-terminus, the 119-residue chain is Single-stranded DNA-binding protein (119 aa).

The SSB domain occupies 3–102 (INIVTLVGRV…IRVDQLELLG (100 aa)).

As to quaternary structure, homotetramer.

The polypeptide is Single-stranded DNA-binding protein (ssb1) (Anabaena variabilis).